Here is a 394-residue protein sequence, read N- to C-terminus: S-adenosylmethionine synthase 2 (394 aa).

Residue E11 participates in Mg(2+) binding. H17 lines the ATP pocket. Position 45 (E45) interacts with K(+). Residues E58 and Q101 each coordinate L-methionine. ATP-binding positions include 169 to 171 (DGK), 237 to 240 (SGRF), D248, 254 to 255 (RK), A271, K275, and K279. D248 is a binding site for L-methionine. K279 is an L-methionine binding site.

The protein belongs to the AdoMet synthase family. Homotetramer. Mn(2+) serves as cofactor. Requires Mg(2+) as cofactor. Co(2+) is required as a cofactor. The cofactor is K(+).

It localises to the cytoplasm. The catalysed reaction is L-methionine + ATP + H2O = S-adenosyl-L-methionine + phosphate + diphosphate. Its pathway is amino-acid biosynthesis; S-adenosyl-L-methionine biosynthesis; S-adenosyl-L-methionine from L-methionine: step 1/1. Its function is as follows. Catalyzes the formation of S-adenosylmethionine from methionine and ATP. The reaction comprises two steps that are both catalyzed by the same enzyme: formation of S-adenosylmethionine (AdoMet) and triphosphate, and subsequent hydrolysis of the triphosphate. This Hordeum vulgare (Barley) protein is S-adenosylmethionine synthase 2 (SAM2).